A 208-amino-acid chain; its full sequence is FMN-dependent NADH:quinone oxidoreductase 1 (208 aa).

The protein belongs to the azoreductase type 1 family. In terms of assembly, homodimer. FMN serves as cofactor.

The enzyme catalyses 2 a quinone + NADH + H(+) = 2 a 1,4-benzosemiquinone + NAD(+). The catalysed reaction is N,N-dimethyl-1,4-phenylenediamine + anthranilate + 2 NAD(+) = 2-(4-dimethylaminophenyl)diazenylbenzoate + 2 NADH + 2 H(+). Functionally, quinone reductase that provides resistance to thiol-specific stress caused by electrophilic quinones. In terms of biological role, also exhibits azoreductase activity. Catalyzes the reductive cleavage of the azo bond in aromatic azo compounds to the corresponding amines. This is FMN-dependent NADH:quinone oxidoreductase 1 from Bacillus thuringiensis subsp. konkukian (strain 97-27).